We begin with the raw amino-acid sequence, 265 residues long: Cytochrome b-c1 complex subunit Rieske, mitochondrial (265 aa).

The N-terminal 53 residues, 1-53, are a transit peptide targeting the mitochondrion; it reads MLRVAGRRLSSSAARSSSTFFTRSSFTVTDDSSPARSPSPSLTSSFLDQIRGF. Topologically, residues 54–102 are mitochondrial matrix; it reads SSNSVSPAHQLGLVSDLPATVAAIKNPSSKIVYDDSNHERYPPGDPSKR. The chain crosses the membrane as a helical span at residues 103 to 125; the sequence is AFAYFVLTGGRFVYASSVRLLIL. Residues 126–265 lie on the Mitochondrial intermembrane side of the membrane; sequence KFVLSMSASK…FLEENKLLIG (140 aa). The 89-residue stretch at 175-263 folds into the Rieske domain; that stretch reads IKLANSVDLG…YSFLEENKLL (89 aa). 4 residues coordinate [2Fe-2S] cluster: cysteine 208, histidine 210, cysteine 227, and histidine 230. Cysteine 213 and cysteine 229 form a disulfide bridge.

Belongs to the Rieske iron-sulfur protein family. As to quaternary structure, component of the ubiquinol-cytochrome c oxidoreductase (cytochrome b-c1 complex, complex III, CIII), a multisubunit enzyme composed of 3 respiratory subunits cytochrome b, cytochrome c1 and Rieske protein, 2 core protein subunits, and several low-molecular weight protein subunits. The complex exists as an obligatory dimer and forms supercomplexes (SCs) in the inner mitochondrial membrane with cytochrome c oxidase (complex IV, CIV). [2Fe-2S] cluster serves as cofactor.

Its subcellular location is the mitochondrion inner membrane. The catalysed reaction is a quinol + 2 Fe(III)-[cytochrome c](out) = a quinone + 2 Fe(II)-[cytochrome c](out) + 2 H(+)(out). In terms of biological role, component of the ubiquinol-cytochrome c oxidoreductase, a multisubunit transmembrane complex that is part of the mitochondrial electron transport chain which drives oxidative phosphorylation. The respiratory chain contains 3 multisubunit complexes succinate dehydrogenase (complex II, CII), ubiquinol-cytochrome c oxidoreductase (cytochrome b-c1 complex, complex III, CIII) and cytochrome c oxidase (complex IV, CIV), that cooperate to transfer electrons derived from NADH and succinate to molecular oxygen, creating an electrochemical gradient over the inner membrane that drives transmembrane transport and the ATP synthase. The cytochrome b-c1 complex catalyzes electron transfer from ubiquinol to cytochrome c, linking this redox reaction to translocation of protons across the mitochondrial inner membrane, with protons being carried across the membrane as hydrogens on the quinol. In the process called Q cycle, 2 protons are consumed from the matrix, 4 protons are released into the intermembrane space and 2 electrons are passed to cytochrome c. The Rieske protein is a catalytic core subunit containing a [2Fe-2S] iron-sulfur cluster. It cycles between 2 conformational states during catalysis to transfer electrons from the quinol bound in the Q(0) site in cytochrome b to cytochrome c1. In Solanum tuberosum (Potato), this protein is Cytochrome b-c1 complex subunit Rieske, mitochondrial (FES1).